A 447-amino-acid chain; its full sequence is GTPase Der (447 aa).

EngA-type G domains follow at residues 4–165 (QIIT…PEEE) and 180–357 (LQIV…KIWN). GTP is bound by residues 10–17 (GRPNVGKS), 57–61 (DTPGL), 119–122 (NKCE), 186–193 (GRPNAGKS), 233–237 (DTAGL), and 298–301 (NKWD). A KH-like domain is found at 358–443 (KKITTSKLNE…PIRFTYVKTK (86 aa)).

Belongs to the TRAFAC class TrmE-Era-EngA-EngB-Septin-like GTPase superfamily. EngA (Der) GTPase family. In terms of assembly, associates with the 50S ribosomal subunit.

In terms of biological role, GTPase that plays an essential role in the late steps of ribosome biogenesis. The polypeptide is GTPase Der (Rickettsia rickettsii (strain Sheila Smith)).